Here is a 101-residue protein sequence, read N- to C-terminus: Acylphosphatase-1 (101 aa).

S2 bears the N-acetylserine mark. S2 is modified (N-acetylalanine). The region spanning 11–101 (SVDYEVFGKV…LDYSDFQIVK (91 aa)) is the Acylphosphatase-like domain. Residues R26 and N44 contribute to the active site.

Belongs to the acylphosphatase family. Organ-common type isozyme is found in many different tissues.

The catalysed reaction is an acyl phosphate + H2O = a carboxylate + phosphate + H(+). This is Acylphosphatase-1 (ACYP1) from Sus scrofa (Pig).